The primary structure comprises 240 residues: Sugar fermentation stimulation protein homolog (240 aa).

It belongs to the SfsA family.

The protein is Sugar fermentation stimulation protein homolog of Saccharolobus islandicus (strain L.S.2.15 / Lassen #1) (Sulfolobus islandicus).